We begin with the raw amino-acid sequence, 114 residues long: Ribulose bisphosphate carboxylase small subunit 2 (114 aa).

The protein belongs to the RuBisCO small chain family. In terms of assembly, heterohexadecamer of 8 large and 8 small subunits. Forms a CsoS2-CsoS1-RuBisCO complex.

It is found in the carboxysome. In terms of biological role, ruBisCO catalyzes two reactions: the carboxylation of D-ribulose 1,5-bisphosphate, the primary event in carbon dioxide fixation, as well as the oxidative fragmentation of the pentose substrate. Both reactions occur simultaneously and in competition at the same active site. Although the small subunit is not catalytic it is essential for maximal activity. Functionally, replacing the endogenous type I ccbLS genes in H.neapolitanus with this carboxysomally targeted enzyme reconstitutes RuBisCO with about 25% of normal activity; the active enzyme is targeted to carboxysomes. In Hydrogenovibrio crunogenus (strain DSM 25203 / XCL-2) (Thiomicrospira crunogena), this protein is Ribulose bisphosphate carboxylase small subunit 2.